We begin with the raw amino-acid sequence, 785 residues long: Pre-rRNA-processing protein TSR1 homolog (785 aa).

The interval 1-59 is disordered; sequence MSTTGHRAGVFKKPSKPHKSWKGKRTKGEITSENRGREGVKQLTRSAHSTHRTISKDAR. Residues 9 to 25 show a composition bias toward basic residues; that stretch reads GVFKKPSKPHKSWKGKR. The span at 26 to 40 shows a compositional bias: basic and acidic residues; sequence TKGEITSENRGREGV. In terms of domain architecture, Bms1-type G spans 83 to 243; sequence APCLVTVVSL…LRILNETKKK (161 aa). The interval 307–426 is disordered; it reads PHPLKAHNKT…GETTASEMMF (120 aa). The span at 376 to 409 shows a compositional bias: acidic residues; that stretch reads LDDEDDEDEEDSDEDMDDSDNEEVEDDSEEEEPM.

This sequence belongs to the TRAFAC class translation factor GTPase superfamily. Bms1-like GTPase family. TSR1 subfamily.

The protein localises to the nucleus. The protein resides in the nucleolus. In terms of biological role, required during maturation of the 40S ribosomal subunit in the nucleolus. In Caenorhabditis elegans, this protein is Pre-rRNA-processing protein TSR1 homolog (tag-151).